The primary structure comprises 517 residues: Protein disulfide-isomerase EUG1 (517 aa).

An N-terminal signal peptide occupies residues 1–29; the sequence is MQVTTRFISAIVSFCLFASFTLAENSARA. Positions 30–141 constitute a Thioredoxin 1 domain; the sequence is TPGSDLLVLT…ITQYMIQLYE (112 aa). N-linked (GlcNAc...) asparagine glycans are attached at residues N159, N174, N207, N293, and N462. The Thioredoxin 2 domain occupies 355-487; it reads YREGTAKPIV…VFEFIKESGT (133 aa). The Prevents secretion from ER motif lies at 514 to 517; it reads HDEL.

Belongs to the protein disulfide isomerase family. Interacts with EPS1. May have O-linked mannose residues.

The protein resides in the endoplasmic reticulum lumen. The enzyme catalyses Catalyzes the rearrangement of -S-S- bonds in proteins.. Probably interacts with nascent polypeptides in the endoplasmic reticulum. It is an essential gene only in the absence of PDI. Its native disulfide isomerase activity is very low. This is Protein disulfide-isomerase EUG1 (EUG1) from Saccharomyces cerevisiae (strain ATCC 204508 / S288c) (Baker's yeast).